The following is a 204-amino-acid chain: MAYMNRSDLDKLKHENIFSGNIIEDAKEFVFGSRKIYTDSVDDLIELYSLAKYLNNENLKDVVIERMDYVCKYIGKDNWSTIYSFYKENGLRNSFLRQYINNNIEEICNTDQFLKLDVDSVCDILDNDEIVVTREYTILNMVLRWLENKRVNIDDFTKVMFVIRFKFITYSELTNAIEKIAPEYRQCLQDLYHMKITRPRHFDN.

Residues 95-177 (FLRQYINNNI…ITYSELTNAI (83 aa)) form the BACK domain.

Belongs to the orthopoxvirus OPG030 family.

In Homo sapiens (Human), this protein is Protein OPG030 (OPG30).